Reading from the N-terminus, the 200-residue chain is Imidazoleglycerol-phosphate dehydratase (200 aa).

Belongs to the imidazoleglycerol-phosphate dehydratase family.

The protein localises to the cytoplasm. It carries out the reaction D-erythro-1-(imidazol-4-yl)glycerol 3-phosphate = 3-(imidazol-4-yl)-2-oxopropyl phosphate + H2O. It participates in amino-acid biosynthesis; L-histidine biosynthesis; L-histidine from 5-phospho-alpha-D-ribose 1-diphosphate: step 6/9. This Prosthecochloris aestuarii (strain DSM 271 / SK 413) protein is Imidazoleglycerol-phosphate dehydratase.